The sequence spans 227 residues: Ureidoacrylate amidohydrolase RutB (227 aa).

The active-site Proton acceptor is D22. Residue K131 is part of the active site. C164 functions as the Nucleophile in the catalytic mechanism.

Belongs to the isochorismatase family. RutB subfamily.

It catalyses the reaction (Z)-3-ureidoacrylate + H2O + H(+) = (Z)-3-aminoacrylate + NH4(+) + CO2. It carries out the reaction (Z)-3-ureidoacrylate + H2O = (Z)-3-aminoacrylate + carbamate + H(+). The catalysed reaction is (Z)-2-methylureidoacrylate + H2O + H(+) = (Z)-2-methylaminoacrylate + NH4(+) + CO2. In terms of biological role, hydrolyzes ureidoacrylate to form aminoacrylate and carbamate. The carbamate hydrolyzes spontaneously, thereby releasing one of the nitrogen atoms of the pyrimidine ring as ammonia and one of its carbon atoms as CO2. The sequence is that of Ureidoacrylate amidohydrolase RutB from Azorhizobium caulinodans (strain ATCC 43989 / DSM 5975 / JCM 20966 / LMG 6465 / NBRC 14845 / NCIMB 13405 / ORS 571).